We begin with the raw amino-acid sequence, 578 residues long: Hyaluronan synthase 1 (578 aa).

The Cytoplasmic segment spans residues 1–25; sequence MRQQDAPKPTPAACRCSGLARRVLT. Residues 26–46 form a helical membrane-spanning segment; that stretch reads IAFALLILGLMTWAYAAGVPL. The Extracellular segment spans residues 47–52; it reads ASDRYG. A helical transmembrane segment spans residues 53–73; it reads LLAFGLYGAFLSAHLVAQSLF. The Cytoplasmic portion of the chain corresponds to 74 to 399; the sequence is AYLEHRRVAA…NALWWHRHHA (326 aa). Residues 400 to 420 form a helical membrane-spanning segment; that stretch reads WMTYEAVVSGLFPFFVAATVL. Residues 421–430 lie on the Extracellular side of the membrane; sequence RLFYAGRPWA. Residues 431 to 451 traverse the membrane as a helical segment; that stretch reads LLWVLLCVQGVALAKAAFAAW. The Cytoplasmic portion of the chain corresponds to 452–457; it reads LRGCLR. A helical transmembrane segment spans residues 458 to 478; sequence MVLLSLYAPLYMCGLLPAKFL. Topologically, residues 479–497 are extracellular; the sequence is ALVTMNQSGWGTSGRRKLA. A helical transmembrane segment spans residues 498–518; sequence ANYVPLLPLALWALLLLGGLV. Topologically, residues 519 to 540 are cytoplasmic; sequence RSVAHEARADWSGPSRAAEAYH. The helical transmembrane segment at 541–561 threads the bilayer; that stretch reads LAAGAGAYVGYWVAMLTLYWV. At 562–578 the chain is on the extracellular side; the sequence is GVRRLCRRRTGGYRVQV.

The protein belongs to the NodC/HAS family. Mg(2+) serves as cofactor. In terms of tissue distribution, widely expressed. Highly expressed in ovary followed by spleen, thymus, prostate, testes and large intestine. Weakly expressed in small intestine.

Its subcellular location is the membrane. The enzyme catalyses [hyaluronan](n) + UDP-N-acetyl-alpha-D-glucosamine = N-acetyl-beta-D-glucosaminyl-(1-&gt;4)-[hyaluronan](n) + UDP + H(+). It carries out the reaction N-acetyl-beta-D-glucosaminyl-(1-&gt;4)-[hyaluronan](n) + UDP-alpha-D-glucuronate = [hyaluronan](n+1) + UDP + H(+). The protein operates within glycan biosynthesis; hyaluronan biosynthesis. In terms of biological role, catalyzes the addition of GlcNAc or GlcUA monosaccharides to the nascent hyaluronan polymer. Therefore, it is essential to hyaluronan synthesis a major component of most extracellular matrices that has a structural role in tissues architectures and regulates cell adhesion, migration and differentiation. This is one of the isozymes catalyzing that reaction. Also able to catalyze the synthesis of chito-oligosaccharide depending on the substrate. In Homo sapiens (Human), this protein is Hyaluronan synthase 1 (HAS1).